We begin with the raw amino-acid sequence, 103 residues long: MIIVTTDTIANQNIVEVKGLVTSSIVQSRNIGKDILSGLKSVIGGELKNYTQMLEDSKKAVRERLVNQAEELGANAIVGLRFELSAGQGTSELIGYGTAVVIG.

Belongs to the UPF0145 family.

The protein is UPF0145 protein BLi01945/BL05168 of Bacillus licheniformis (strain ATCC 14580 / DSM 13 / JCM 2505 / CCUG 7422 / NBRC 12200 / NCIMB 9375 / NCTC 10341 / NRRL NRS-1264 / Gibson 46).